We begin with the raw amino-acid sequence, 272 residues long: Undecaprenyl-diphosphatase (272 aa).

The next 8 helical transmembrane spans lie at 5–25 (YSLF…FLPV), 45–65 (AKTF…VVFW), 88–108 (HLTL…GLAF), 115–135 (LFNP…LLAA), 152–171 (TYRQ…WPGF), 189–209 (YAAS…ASGL), 221–241 (GDLP…LIAI), and 251–271 (ISFV…YWVF).

The protein belongs to the UppP family.

It localises to the cell inner membrane. The enzyme catalyses di-trans,octa-cis-undecaprenyl diphosphate + H2O = di-trans,octa-cis-undecaprenyl phosphate + phosphate + H(+). Its function is as follows. Catalyzes the dephosphorylation of undecaprenyl diphosphate (UPP). Confers resistance to bacitracin. This Yersinia enterocolitica serotype O:8 / biotype 1B (strain NCTC 13174 / 8081) protein is Undecaprenyl-diphosphatase.